The sequence spans 74 residues: U4-theraphotoxin-Cg1a (74 aa).

The N-terminal stretch at 1–19 (MNATIFAFLLLLNLAMHNA) is a signal peptide. Residues 20 to 39 (TEQSSETDMDDTLLIPEINR) constitute a propeptide that is removed on maturation. Intrachain disulfides connect Cys42-Cys56, Cys49-Cys61, and Cys55-Cys71.

The protein belongs to the neurotoxin 36 family. 01 subfamily. As to expression, expressed by the venom gland.

The protein localises to the secreted. Its function is as follows. Probable ion channel inhibitor. This chain is U4-theraphotoxin-Cg1a, found in Chilobrachys guangxiensis (Chinese earth tiger tarantula).